Here is a 235-residue protein sequence, read N- to C-terminus: Exotoxin type C (235 aa).

An N-terminal signal peptide occupies residues 1-27; that stretch reads MKKINIIKIVFIITVILISTISPIIKS. The Zn(2+) site is built by H194, H228, and D230.

This sequence belongs to the staphylococcal/streptococcal toxin family.

In terms of biological role, superantigen that acts as a causative agent of the symptoms associated with scarlet fever. Has been associated with streptococcal toxic shock-like disease and may play a role in the early events of rheumatic fever. Superantigens cross-link major histocompatibility complex (MHC) class II and T-cell receptor (TCR) molecules, resulting in an overstimulation of T-cells associated with a massive release of pyrogenic and inflammatory cytokines. The protein is Exotoxin type C of Streptococcus pyogenes serotype M18 (strain MGAS8232).